Consider the following 427-residue polypeptide: MTTSLSLFQRAQHRIPGGVNSPVRAFKGVGGTPIFIEKAQGAYLYDTEGNQYIDYVGSWGPMILGHNHPTILDAVISTAQNGLSFGAPTALEIELAELVCSLVPSIDMVRMVSSGTEATMSAIRLARGYTKRDKIIKFEGCYHGHADSLLVKAGSGALTLGQPSSPGVPADFAKHTLTCTYNDLDSVKHAFEQYPNEIACLIVEPVAGNMNCIPPQEGFLQGLRALCDQYGAVFIIDEVMTGFRVALGGAQTYYGVTPDLTCLGKVIGGGMPVGAFGGKKAIMQHIAPLGPVYQAGTLSGNPIAMAAGLACLTELKKAGNAQRLAQQTEKLALGLKALADKHHVPFVVNYVGGMFGIFFTEQKTVSSYQAVMACDTEKFNRFFHAMLAQGIYLAPSAFEAGFMSLAHSDQDIERTLQAADQVFSQLA.

K265 bears the N6-(pyridoxal phosphate)lysine mark.

Belongs to the class-III pyridoxal-phosphate-dependent aminotransferase family. HemL subfamily. In terms of assembly, homodimer. Pyridoxal 5'-phosphate serves as cofactor.

It is found in the cytoplasm. The enzyme catalyses (S)-4-amino-5-oxopentanoate = 5-aminolevulinate. Its pathway is porphyrin-containing compound metabolism; protoporphyrin-IX biosynthesis; 5-aminolevulinate from L-glutamyl-tRNA(Glu): step 2/2. This is Glutamate-1-semialdehyde 2,1-aminomutase from Pasteurella multocida (strain Pm70).